Consider the following 1229-residue polypeptide: uncharacterized protein (1229 aa).

A signal peptide spans 1–19 (MKYFLLLFLLVLSFTLVES). 6 N-linked (GlcNAc...) asparagine glycosylation sites follow: N238, N270, N370, N538, N691, and N701. Residues 678-813 (RMVNFANVME…QWNIDTVKMN (136 aa)) enclose the Galectin 1 domain. Polar residues predominate over residues 818–829 (HTTTVEPSTPLE). The disordered stretch occupies residues 818–903 (HTTTVEPSTP…TLPPTTTPYN (86 aa)). Residues 830 to 846 (TASTSQSTPSATLTSTT) are compositionally biased toward low complexity. Polar residues predominate over residues 847 to 869 (ENIPSTSKIPETSTTQRPTSPIL). Residues 870-901 (TSGATSTSSSTESTTTSPTTSTTTTLPPTTTP) are compositionally biased toward low complexity. N903, N938, and N948 each carry an N-linked (GlcNAc...) asparagine glycan. The 135-residue stretch at 925–1059 (RPVVFSRYME…ESTIDTVSMA (135 aa)) folds into the Galectin 2 domain. The disordered stretch occupies residues 1061-1087 (VRPPTTPTTTTSTTTTTTPKLTTTSTL). Low complexity predominate over residues 1067–1087 (PTTTTSTTTTTTPKLTTTSTL). An N-linked (GlcNAc...) asparagine glycan is attached at N1146.

This is an uncharacterized protein from Caenorhabditis elegans.